A 318-amino-acid chain; its full sequence is Mediator of RNA polymerase II transcription subunit 30 (318 aa).

Residues 1 to 13 (MWKYGQNQGNQGP) show a composition bias toward low complexity. Disordered stretches follow at residues 1–92 (MWKY…QQQQ) and 120–142 (GGGV…QNIP). Residues 14 to 33 (SSGGGGGGGPNMMPMGGFGM) are compositionally biased toward gly residues. Low complexity-rich tracts occupy residues 34-55 (QHGN…QQMG), 78-92 (PGMS…QQQQ), and 124-142 (VPQQ…QNIP).

This sequence belongs to the Mediator complex subunit 30 family. In terms of assembly, component of the Mediator complex, which includes at least CDK8, MED4, MED6, MED11, MED14, MED17, MED18, MED20, MED21, MED22, MED27, MED28, MED30 and MED31.

It is found in the nucleus. Functionally, component of the Mediator complex, a coactivator involved in the regulated transcription of nearly all RNA polymerase II-dependent genes. Mediator functions as a bridge to convey information from gene-specific regulatory proteins to the basal RNA polymerase II transcription machinery. Mediator is recruited to promoters by direct interactions with regulatory proteins and serves as a scaffold for the assembly of a functional preinitiation complex with RNA polymerase II and the general transcription factors. The sequence is that of Mediator of RNA polymerase II transcription subunit 30 (MED30) from Drosophila melanogaster (Fruit fly).